We begin with the raw amino-acid sequence, 510 residues long: Insulinoma-associated protein 1 (510 aa).

Basic residues predominate over residues 1–12 (MPRGFLVKRSKK). An SNAG domain region spans residues 1 to 20 (MPRGFLVKRSKKSTPVSYRV). Disordered regions lie at residues 1–110 (MPRG…SREH) and 176–226 (GAEA…PKAI). The tract at residues 2-7 (PRGFLV) is required and sufficient for interaction with KDM1A. The necessary for interaction with CCND1 stretch occupies residues 43-58 (PPAPSPVPGPLPPPPP). Residues 43 to 59 (PPAPSPVPGPLPPPPPA) are compositionally biased toward pro residues. Low complexity-rich tracts occupy residues 64–74 (AALAAALACAP) and 209–218 (EPPAKAVKAP). The C2H2-type 1; atypical zinc-finger motif lies at 267 to 287 (FICQLCKEEYADPFALAQHKC). The C2H2-type 2 zinc-finger motif lies at 295 to 317 (YRCPECAKVFSCPANLASHRRWH). Residues 315 to 362 (RWHKPRPAPAAARAPEPEAAARAEAREAPGGGSDRDTPSPGGVSESGS) form a disordered region. A compositionally biased stretch (basic and acidic residues) spans 329-351 (PEPEAAARAEAREAPGGGSDRDT). 3 consecutive C2H2-type zinc fingers follow at residues 367-389 (YECH…LLAH), 441-464 (HLCP…RLLH), and 469-492 (FPCK…NKCH).

The protein belongs to the INSM1 family. In terms of assembly, interacts (via the SNAG domain) with HDAC1. Interacts (via the SNAG domain) with HDAC2. Interacts (via the SNAG domain) with KDM1A. Interacts (via the SNAG domain) with RCOR1. Interacts with SORBS1. Interacts (via the N-terminal region) with CCND1 (via cyclin N-terminal domain); the interaction competes with the binding of CCND1 to CDK4 during cell cycle progression and increases its transcriptional repressor activity. Interacts with HDAC3; the interaction increases its transcriptional repressor activity. Expressed in pancreatic duct cells. Expressed in several tumor cell lines of neuroendocrine origin including pheochromocytoma, medullary thyroid carcinoma, insulinoma, medulloblastoma, retinoblastoma, pheochromacytoma, medullary thyroid carcinoma and small cell lung carcinoma.

It localises to the nucleus. Functionally, sequence-specific DNA-binding transcriptional regulator that plays a key role in neurogenesis and neuroendocrine cell differentiation during embryonic and/or fetal development. Binds to the consensus sequence 5'-[TG][TC][TC][TT][GA]GGG[CG]A-3' in target promoters. Acts as a transcriptional repressor of NEUROD1 and INS expression via its interaction with cyclin CCND1 in a cell cycle-independent manner. Negatively regulates skeletal muscle-specific gene expression in endocrine cells of the pituitary by inhibiting the Notch signaling pathway. Represses target gene transcription by recruiting chromatin-modifying factors, such as HDAC1, HDAC2, HDAC3, KDM1A and RCOR1 histone deacetylases. Binds to its own promoter, suggesting autoregulation as a self-control feedback mechanism. Competes with histone H3 for the same binding site on the histone demethylase complex formed by KDM1A and RCOR1, and thereby inhibits demethylation of histone H3 at 'Lys-4'. Promotes the generation and expansion of neuronal basal progenitor cells in the developing neocortex. Involved in the differentiation of endocrine cells of the developing anterior pituitary gland, of the pancreas and intestine, and of sympatho-adrenal cells in the peripheral nervous system. Promotes cell cycle signaling arrest and inhibition of cellular proliferation. The chain is Insulinoma-associated protein 1 (INSM1) from Homo sapiens (Human).